The chain runs to 407 residues: Peptidase T (407 aa).

His-77 is a binding site for Zn(2+). Asp-79 is a catalytic residue. Asp-138 is a Zn(2+) binding site. The active-site Proton acceptor is Glu-172. Residues Glu-173, Asp-195, and His-377 each contribute to the Zn(2+) site.

Belongs to the peptidase M20B family. It depends on Zn(2+) as a cofactor.

The protein localises to the cytoplasm. It carries out the reaction Release of the N-terminal residue from a tripeptide.. In terms of biological role, cleaves the N-terminal amino acid of tripeptides. The sequence is that of Peptidase T from Aeromonas salmonicida (strain A449).